The following is a 620-amino-acid chain: 1-deoxy-D-xylulose-5-phosphate synthase (620 aa).

Residues His80 and 121–123 (GHS) each bind thiamine diphosphate. Position 152 (Asp152) interacts with Mg(2+). Thiamine diphosphate-binding positions include 153-154 (GA), Asn181, Tyr288, and Glu370. Asn181 provides a ligand contact to Mg(2+).

The protein belongs to the transketolase family. DXPS subfamily. As to quaternary structure, homodimer. Requires Mg(2+) as cofactor. Thiamine diphosphate is required as a cofactor.

The enzyme catalyses D-glyceraldehyde 3-phosphate + pyruvate + H(+) = 1-deoxy-D-xylulose 5-phosphate + CO2. Its pathway is metabolic intermediate biosynthesis; 1-deoxy-D-xylulose 5-phosphate biosynthesis; 1-deoxy-D-xylulose 5-phosphate from D-glyceraldehyde 3-phosphate and pyruvate: step 1/1. Functionally, catalyzes the acyloin condensation reaction between C atoms 2 and 3 of pyruvate and glyceraldehyde 3-phosphate to yield 1-deoxy-D-xylulose-5-phosphate (DXP). The chain is 1-deoxy-D-xylulose-5-phosphate synthase from Escherichia coli (strain 55989 / EAEC).